We begin with the raw amino-acid sequence, 148 residues long: Putative nickel-responsive regulator (148 aa).

Histidine 88, histidine 99, histidine 101, and cysteine 107 together coordinate Ni(2+).

The protein belongs to the transcriptional regulatory CopG/NikR family. In terms of assembly, homotetramer. Requires Ni(2+) as cofactor.

Its function is as follows. Transcriptional regulator. This is Putative nickel-responsive regulator from Helicobacter pylori (strain ATCC 700392 / 26695) (Campylobacter pylori).